Consider the following 211-residue polypeptide: Large ribosomal subunit protein uL4 (211 aa).

The interval 48-89 (KRAGTASTKTRVEVRGGGAKPWRQKGTGRARAGSRTSPLWRG) is disordered.

This sequence belongs to the universal ribosomal protein uL4 family. As to quaternary structure, part of the 50S ribosomal subunit.

Functionally, one of the primary rRNA binding proteins, this protein initially binds near the 5'-end of the 23S rRNA. It is important during the early stages of 50S assembly. It makes multiple contacts with different domains of the 23S rRNA in the assembled 50S subunit and ribosome. In terms of biological role, forms part of the polypeptide exit tunnel. The sequence is that of Large ribosomal subunit protein uL4 from Desulfotalea psychrophila (strain LSv54 / DSM 12343).